Here is a 177-residue protein sequence, read N- to C-terminus: Large ribosomal subunit protein uL6 (177 aa).

This sequence belongs to the universal ribosomal protein uL6 family. As to quaternary structure, part of the 50S ribosomal subunit.

This protein binds to the 23S rRNA, and is important in its secondary structure. It is located near the subunit interface in the base of the L7/L12 stalk, and near the tRNA binding site of the peptidyltransferase center. This chain is Large ribosomal subunit protein uL6, found in Magnetococcus marinus (strain ATCC BAA-1437 / JCM 17883 / MC-1).